A 303-amino-acid polypeptide reads, in one-letter code: Ferrochelatase (303 aa).

Residues His-185 and Glu-262 each contribute to the Fe cation site.

It belongs to the ferrochelatase family.

The protein resides in the cytoplasm. It catalyses the reaction heme b + 2 H(+) = protoporphyrin IX + Fe(2+). The protein operates within porphyrin-containing compound metabolism; protoheme biosynthesis; protoheme from protoporphyrin-IX: step 1/1. In terms of biological role, catalyzes the ferrous insertion into protoporphyrin IX. This chain is Ferrochelatase, found in Campylobacter jejuni subsp. jejuni serotype O:2 (strain ATCC 700819 / NCTC 11168).